The following is a 470-amino-acid chain: ATP synthase subunit beta (470 aa).

151-158 (GGAGVGKT) provides a ligand contact to ATP.

Belongs to the ATPase alpha/beta chains family. In terms of assembly, F-type ATPases have 2 components, CF(1) - the catalytic core - and CF(0) - the membrane proton channel. CF(1) has five subunits: alpha(3), beta(3), gamma(1), delta(1), epsilon(1). CF(0) has three main subunits: a(1), b(2) and c(9-12). The alpha and beta chains form an alternating ring which encloses part of the gamma chain. CF(1) is attached to CF(0) by a central stalk formed by the gamma and epsilon chains, while a peripheral stalk is formed by the delta and b chains.

Its subcellular location is the cell membrane. The catalysed reaction is ATP + H2O + 4 H(+)(in) = ADP + phosphate + 5 H(+)(out). Functionally, produces ATP from ADP in the presence of a proton gradient across the membrane. The catalytic sites are hosted primarily by the beta subunits. The polypeptide is ATP synthase subunit beta (Mycoplasma mobile (strain ATCC 43663 / 163K / NCTC 11711) (Mesomycoplasma mobile)).